We begin with the raw amino-acid sequence, 25 residues long: Panurgine K (25 aa).

2 cysteine pairs are disulfide-bonded: C8–C23 and C11–C19.

It is found in the target cell membrane. Its subcellular location is the secreted. Its function is as follows. Antimicrobial peptide active against Gram-positive bacteria M.luteus (MIC=1.6 uM) and B.subtilis (MIC=3.3 uM). Less active against Gram-negative bacteria E.coli (MIC=63.3 uM) and yeast C.albicans (MIC=24.2 uM). Not active against S.aureus and P.aeruginosa. Has no hemolytic activity against human erythrocytes. Probably acts by disrupting membranes of target cells. This Panurgus calcaratus (Solitary bee) protein is Panurgine K.